We begin with the raw amino-acid sequence, 243 residues long: Pyridoxine 5'-phosphate synthase (243 aa).

N9 contributes to the 3-amino-2-oxopropyl phosphate binding site. Residue 11 to 12 (DH) participates in 1-deoxy-D-xylulose 5-phosphate binding. R20 is a 3-amino-2-oxopropyl phosphate binding site. H45 (proton acceptor) is an active-site residue. 2 residues coordinate 1-deoxy-D-xylulose 5-phosphate: R47 and H52. The active-site Proton acceptor is E72. T102 is a 1-deoxy-D-xylulose 5-phosphate binding site. Catalysis depends on H193, which acts as the Proton donor. Residues G194 and 215-216 (GH) each bind 3-amino-2-oxopropyl phosphate.

It belongs to the PNP synthase family. Homooctamer; tetramer of dimers.

The protein localises to the cytoplasm. The enzyme catalyses 3-amino-2-oxopropyl phosphate + 1-deoxy-D-xylulose 5-phosphate = pyridoxine 5'-phosphate + phosphate + 2 H2O + H(+). The protein operates within cofactor biosynthesis; pyridoxine 5'-phosphate biosynthesis; pyridoxine 5'-phosphate from D-erythrose 4-phosphate: step 5/5. In terms of biological role, catalyzes the complicated ring closure reaction between the two acyclic compounds 1-deoxy-D-xylulose-5-phosphate (DXP) and 3-amino-2-oxopropyl phosphate (1-amino-acetone-3-phosphate or AAP) to form pyridoxine 5'-phosphate (PNP) and inorganic phosphate. This is Pyridoxine 5'-phosphate synthase from Escherichia coli O157:H7.